The primary structure comprises 142 residues: Large ribosomal subunit protein uL13 (142 aa).

It belongs to the universal ribosomal protein uL13 family. As to quaternary structure, part of the 50S ribosomal subunit.

Its function is as follows. This protein is one of the early assembly proteins of the 50S ribosomal subunit, although it is not seen to bind rRNA by itself. It is important during the early stages of 50S assembly. In Pseudomonas putida (strain ATCC 700007 / DSM 6899 / JCM 31910 / BCRC 17059 / LMG 24140 / F1), this protein is Large ribosomal subunit protein uL13.